Reading from the N-terminus, the 206-residue chain is Uridine kinase (206 aa).

An ATP-binding site is contributed by G11–T18.

The protein belongs to the uridine kinase family.

It is found in the cytoplasm. It catalyses the reaction uridine + ATP = UMP + ADP + H(+). It carries out the reaction cytidine + ATP = CMP + ADP + H(+). It participates in pyrimidine metabolism; CTP biosynthesis via salvage pathway; CTP from cytidine: step 1/3. The protein operates within pyrimidine metabolism; UMP biosynthesis via salvage pathway; UMP from uridine: step 1/1. The polypeptide is Uridine kinase (Macrococcus caseolyticus (strain JCSC5402) (Macrococcoides caseolyticum)).